A 205-amino-acid chain; its full sequence is High frequency lysogenization protein HflD homolog (205 aa).

It belongs to the HflD family.

The protein localises to the cytoplasm. It localises to the cell inner membrane. This is High frequency lysogenization protein HflD homolog from Shewanella sp. (strain MR-4).